A 165-amino-acid polypeptide reads, in one-letter code: NADPH-dependent 7-cyano-7-deazaguanine reductase (165 aa).

The active-site Thioimide intermediate is the Cys56. The active-site Proton donor is Asp63. Residues 78–80 and 97–98 contribute to the substrate site; these read VES and HE.

This sequence belongs to the GTP cyclohydrolase I family. QueF type 1 subfamily.

It localises to the cytoplasm. It catalyses the reaction 7-aminomethyl-7-carbaguanine + 2 NADP(+) = 7-cyano-7-deazaguanine + 2 NADPH + 3 H(+). It functions in the pathway tRNA modification; tRNA-queuosine biosynthesis. Its function is as follows. Catalyzes the NADPH-dependent reduction of 7-cyano-7-deazaguanine (preQ0) to 7-aminomethyl-7-deazaguanine (preQ1). This is NADPH-dependent 7-cyano-7-deazaguanine reductase from Bacillus pumilus (strain SAFR-032).